Consider the following 562-residue polypeptide: Gut esterase 1 (562 aa).

The signal sequence occupies residues 1–16 (MRIFLVSVILINACWA). N-linked (GlcNAc...) asparagine; atypical glycosylation occurs at asparagine 73. A disulfide bond links cysteine 75 and cysteine 93. Catalysis depends on serine 198, which acts as the Acyl-ester intermediate. Cysteine 250 and cysteine 258 are joined by a disulfide. Residues glutamate 319 and histidine 452 each act as charge relay system in the active site. The short motif at 559–562 (KDEL) is the Prevents secretion from ER element.

The protein belongs to the type-B carboxylesterase/lipase family. As to expression, expressed only in the intestine.

The protein resides in the endoplasmic reticulum lumen. The catalysed reaction is a carboxylic ester + H2O = an alcohol + a carboxylate + H(+). In Caenorhabditis elegans, this protein is Gut esterase 1 (ges-1).